Here is a 50-residue protein sequence, read N- to C-terminus: MDAAHLSDLDIDALEISEFLDESRLEDSEVVAKVMSASCTTCECCCSCSS.

Positions 38 to 39 (SC) form a cross-link, thiazole-4-carboxylic acid (Ser-Cys). The segment at residues 38–46 (SCTTCECCC) is a cross-link (3-hydroxypyridine-2,5-dicarboxylic acid (Ser-Cys) (with S-47)). A cross-link (3-hydroxypyridine-2,5-dicarboxylic acid (Ser-Ser) (with C-46)) is located at residues 38–47 (SCTTCECCCS). The segment at residues 41-42 (TC) is a cross-link (thiazole-4-carboxylic acid (Thr-Cys)). Glu-43 carries the 4-hydroxyglutamate modification. Residues 43-44 (EC) constitute a cross-link (thiazole-4-carboxylic acid (Glu-Cys)). The 2-(cystein-S-ylcarbonyl)-3-methyl-4-(glutam-5-yloxy)methylindole (Glu-Cys) cross-link spans 43 to 45 (ECC). The thiazole-4-carboxylic acid (Cys-Cys) cross-link spans 45–46 (CC). Residues 47 to 48 (SC) constitute a cross-link (thiazole-4-carboxylic acid (Ser-Cys)). Position 49 is a 2,3-didehydroalanine (Ser) (Ser-49). A Serine amide; atypical modification is found at Ser-49.

This sequence belongs to the thiocillin family. The amidation of Ser-49 is produced by the oxidative cleavage of Ser-50 rather than of a glycine, as in eukaryotes.

Inhibits bacterial protein biosynthesis by binding to ribosomes. Specifically, binds to the complex of 23S rRNA and ribosomal protein L11 (RPLK) in the 50S ribosomal subunit. While allowing a weak binding of elongation factor G (EF-G) to the ribosome and subsequent GTP-hydrolysis, probably impairs conformational changes in both the ribosome and EF-G which are necessary for translocation. In vitro, inhibits Gram-positive bacteria S.aureus strain 209P (MIC=0.0009 ug/ml), S.aureus strain 133 (MIC=0.0019 ug/ml), S.aureus strain B3 (MIC=0.003 ug/ml), S.aureus strain Hb (MIC=0.003 ug/ml), M.citreus strain ATCC 8411 (MIC=0.0038 ug/ml), M.lysodeikticus strain ATCC 4698 (MIC=0.003 ug/ml), S.lutea strain ATCC 9341 (MIC=0.0011 ug/ml), S.faecalis strain ATCC 9790 (MIC=0.0007 ug/ml), S.viridans (MIC=0.0065 ug/ml), S.pyogenes hemolyticus strain Dig7 (MIC=0.00028 ug/ml), D.pneumoniae strain Til (MIC=0.00015 ug/ml), N.catrrhalis (MIC=0.0017 ug/ml), L.casei strain ATCC 6633 (MIC=0.003 ug/ml), B.cereus strain ATCC 6630 (MIC=0.0071 ug/ml) and various isolates of L.monocytogenes. In vitro, inhibits Gram-negative bacterium P.multocida strain A125 (MIC=0.0024 ug/ml) but not M.smegmatis strain ATCC 6630, S.typhimurium, A.aerogenes strain ATCC 8308, P.vulgaris, K.pneumoniae strain ATCC 10031, S.marcescens strain A476, P.aeruginosa strain Bass or B.bronchiseptica strain CN387. Does not inhibit Gram-negative bacterium E.coli strain ATCC 9637 but does inhibit purified ribosomes from E.coli. In vivo, has no systemic effect in mice infected with staphylococci or streptococci when applied orally or subcutaneously. Has a local effect in mice infected subcutaneously or intraperitoneally with staphylococci when applied immediately afterwards. Is not toxic to mice. The polypeptide is Nosiheptide precursor (Streptomyces actuosus).